Here is a 1381-residue protein sequence, read N- to C-terminus: DNA-directed RNA polymerase subunit beta'' (1381 aa).

Positions 224, 295, 302, and 305 each coordinate Zn(2+).

It belongs to the RNA polymerase beta' chain family. RpoC2 subfamily. As to quaternary structure, in plastids the minimal PEP RNA polymerase catalytic core is composed of four subunits: alpha, beta, beta', and beta''. When a (nuclear-encoded) sigma factor is associated with the core the holoenzyme is formed, which can initiate transcription. The cofactor is Zn(2+).

Its subcellular location is the plastid. It localises to the chloroplast. It carries out the reaction RNA(n) + a ribonucleoside 5'-triphosphate = RNA(n+1) + diphosphate. Functionally, DNA-dependent RNA polymerase catalyzes the transcription of DNA into RNA using the four ribonucleoside triphosphates as substrates. In Guizotia abyssinica (Niger), this protein is DNA-directed RNA polymerase subunit beta''.